The sequence spans 130 residues: MPPRKTARPRRRDRKHIESGIAHIKSTFNNTLVTITDKNGNAISWASAGTVGFKGSRKSTPFAAQMAAEAAAKQAMEHGLREVECYVKGPGAGREAAIRSLQAAGLEVSVIKDVTPIPHNGCRPPKRRRV.

The protein belongs to the universal ribosomal protein uS11 family. In terms of assembly, part of the 30S ribosomal subunit. Interacts with proteins S7 and S18. Binds to IF-3.

Located on the platform of the 30S subunit, it bridges several disparate RNA helices of the 16S rRNA. Forms part of the Shine-Dalgarno cleft in the 70S ribosome. The sequence is that of Small ribosomal subunit protein uS11 from Moorella thermoacetica (strain ATCC 39073 / JCM 9320).